Here is a 300-residue protein sequence, read N- to C-terminus: tRNA dimethylallyltransferase 1 (300 aa).

Position 10–17 (10–17 (GPTGVGKT)) interacts with ATP. 12–17 (TGVGKT) serves as a coordination point for substrate. The interval 35–38 (DSRQ) is interaction with substrate tRNA.

It belongs to the IPP transferase family. Monomer. Mg(2+) serves as cofactor.

The catalysed reaction is adenosine(37) in tRNA + dimethylallyl diphosphate = N(6)-dimethylallyladenosine(37) in tRNA + diphosphate. In terms of biological role, catalyzes the transfer of a dimethylallyl group onto the adenine at position 37 in tRNAs that read codons beginning with uridine, leading to the formation of N6-(dimethylallyl)adenosine (i(6)A). This chain is tRNA dimethylallyltransferase 1, found in Phocaeicola vulgatus (strain ATCC 8482 / DSM 1447 / JCM 5826 / CCUG 4940 / NBRC 14291 / NCTC 11154) (Bacteroides vulgatus).